A 388-amino-acid chain; its full sequence is Phosphopentomutase (388 aa).

The Mn(2+) site is built by aspartate 9, aspartate 283, histidine 288, aspartate 324, histidine 325, and histidine 336.

The protein belongs to the phosphopentomutase family. The cofactor is Mn(2+).

It localises to the cytoplasm. The catalysed reaction is 2-deoxy-alpha-D-ribose 1-phosphate = 2-deoxy-D-ribose 5-phosphate. It carries out the reaction alpha-D-ribose 1-phosphate = D-ribose 5-phosphate. The protein operates within carbohydrate degradation; 2-deoxy-D-ribose 1-phosphate degradation; D-glyceraldehyde 3-phosphate and acetaldehyde from 2-deoxy-alpha-D-ribose 1-phosphate: step 1/2. In terms of biological role, isomerase that catalyzes the conversion of deoxy-ribose 1-phosphate (dRib-1-P) and ribose 1-phosphate (Rib-1-P) to deoxy-ribose 5-phosphate (dRib-5-P) and ribose 5-phosphate (Rib-5-P), respectively. The sequence is that of Phosphopentomutase from Deinococcus radiodurans (strain ATCC 13939 / DSM 20539 / JCM 16871 / CCUG 27074 / LMG 4051 / NBRC 15346 / NCIMB 9279 / VKM B-1422 / R1).